The chain runs to 313 residues: Olfactory receptor 1M1 (313 aa).

The Extracellular segment spans residues 1–25 (MEPQNHTSASEFILLGLSEKPDHDP). N5 carries an N-linked (GlcNAc...) asparagine glycan. A helical transmembrane segment spans residues 26–46 (VLFSLFLCMYMITVVGNLLII). The Cytoplasmic segment spans residues 47-54 (LAISFDSH). The chain crosses the membrane as a helical span at residues 55–75 (LHTPMYFFLANLSLVDFCLAT). Topologically, residues 76–97 (NTVPKMLVNIQTRNKSISYPCC) are extracellular. Residue N89 is glycosylated (N-linked (GlcNAc...) asparagine). A disulfide bridge links C97 with C179. Residues 98 to 118 (LTQMYFFHFFGIMDSVLIAVM) form a helical membrane-spanning segment. Topologically, residues 119–142 (AYDRFVAICHPLHYSTIMSPRLCG) are cytoplasmic. A helical transmembrane segment spans residues 143–163 (LLVGVPWVYSCFISLTHILLM). Over 164-196 (ARLVFCGKNELPHYFCDLTPLLRLSCTDTTVNK) the chain is Extracellular. Residues 197-217 (IFVLIVAGMVIATPFVCILAS) form a helical membrane-spanning segment. The Cytoplasmic segment spans residues 218-244 (YARIIVAIMKVPSAGGRKKAFSTCSSH). The chain crosses the membrane as a helical span at residues 245–265 (LSVVALFYGTTIGVYLCPSSV). Residues 266-274 (RTAVKEKAS) lie on the Extracellular side of the membrane. The chain crosses the membrane as a helical span at residues 275 to 292 (AVMYTAVTPMLNPFIYSL). Topologically, residues 293–313 (RNRDLKGALKKIINRKISTSS) are cytoplasmic.

The protein belongs to the G-protein coupled receptor 1 family. In terms of tissue distribution, expressed in testis.

The protein resides in the cell membrane. Functionally, odorant receptor. The protein is Olfactory receptor 1M1 of Mus musculus (Mouse).